The primary structure comprises 356 residues: Probable neutral protease 2 homolog TRV_06370 (356 aa).

The signal sequence occupies residues 1-17 (MQFTALLAALGAPLALA). The propeptide occupies 18–183 (ASIPAAAHNH…DDSTGVIDKR (166 aa)). 2 cysteine pairs are disulfide-bonded: Cys-191/Cys-262 and Cys-269/Cys-287. His-311 serves as a coordination point for Zn(2+). Residue Glu-312 is part of the active site. Positions 315 and 326 each coordinate Zn(2+).

This sequence belongs to the peptidase M35 family. Zn(2+) is required as a cofactor.

Its subcellular location is the secreted. The enzyme catalyses Preferential cleavage of bonds with hydrophobic residues in P1'. Also 3-Asn-|-Gln-4 and 8-Gly-|-Ser-9 bonds in insulin B chain.. In terms of biological role, probable secreted metalloprotease that shows high activities on basic nuclear substrates such as histone and protamine. May be involved in virulence. In Trichophyton verrucosum (strain HKI 0517), this protein is Probable neutral protease 2 homolog TRV_06370.